Here is a 560-residue protein sequence, read N- to C-terminus: Hemocyanin, units G and H (560 aa).

A disulfide bond links Cys1 and Cys11. A unit G region spans residues Cys1–Glu184. The segment at residues Cys12 to His14 is a cross-link (2'-(S-cysteinyl)-histidine (Cys-His)). Cysteines 93 and 98 form a disulfide. N-linked (GlcNAc...) asparagine glycosylation occurs at Asn142. A unit H region spans residues Asp185–Arg560. A Cu cation-binding site is contributed by His230. An intrachain disulfide couples Cys236 to Cys246. Asn240 carries N-linked (GlcNAc...) asparagine glycosylation. Residues Cys247–His249 constitute a cross-link (2'-(S-cysteinyl)-histidine (Cys-His)). Residues His249, His258, His358, His362, and His389 each contribute to the Cu cation site. 2 disulfides stabilise this stretch: Cys348–Cys415 and Cys476–Cys482.

This sequence belongs to the tyrosinase family. Hemocyanin subfamily. As to quaternary structure, decamers of large identical subunits (390 kDa), each containing 8 globular oxygen-binding functional units. It depends on Cu(2+) as a cofactor.

Hemocyanins are copper-containing oxygen carriers occurring freely dissolved in the hemolymph of many mollusks and arthropods. The chain is Hemocyanin, units G and H from Sepia officinalis (Common cuttlefish).